The sequence spans 235 residues: Serine/arginine-rich splicing factor 7 (235 aa).

The 74-residue stretch at 11–84 (TKVYVGNLGT…SRVRVELSTG (74 aa)) folds into the RRM domain. Lysine 24 bears the N6-acetyllysine; alternate mark. Lysine 24 participates in a covalent cross-link: Glycyl lysine isopeptide (Lys-Gly) (interchain with G-Cter in SUMO2); alternate. Phosphoserine is present on serine 32. Residues 81-98 (LSTGMPRRSRFDRPPARR) form a sufficient for interaction with NXF1 region. The CCHC-type zinc finger occupies 104–120 (DRCYECGEKGHYAYDCH). Basic residues predominate over residues 123-180 (SRRRRSRSRSRSHSRSRGRRYSRSRSRSRGRRSRSASPRRSRSVSLRRSRSASLRRSR). A disordered region spans residues 123-235 (SRRRRSRSRS…RRSASPERVD (113 aa)). Tandem repeats lie at residues 153-160 (RRSRSASP), 161-168 (RRSRSVSL), 169-176 (RRSRSASL), and 177-184 (RRSRSGSI). The 6 X 8 AA repeats of R-R-S-R-S-X-S-X stretch occupies residues 153–223 (RRSRSASPRR…SPKRSRSPSG (71 aa)). A phosphoserine mark is found at serine 163, serine 165, and serine 167. Phosphoserine occurs at positions 181, 183, 189, 191, and 193. Residues 187-219 (SRSRSRSRSRSRSLSRPRSSRSKSRSPSPKRSR) are compositionally biased toward basic residues. One copy of the 5; approximate repeat lies at 208 to 215 (SKSRSPSP). The 6; approximate repeat unit spans residues 216-223 (KRSRSPSG). A phosphoserine mark is found at serine 228 and serine 230.

This sequence belongs to the splicing factor SR family. Found in large molecular weight complexes containing CCNL1 and the p110 isoforms of either CDC2L1 or CDC2L2. Interacts with CCNL2 and CPSF6. Interacts with NXF1. Interacts with YTHDC1. In terms of processing, extensively phosphorylated on serine residues in the RS domain.

It is found in the nucleus. The protein resides in the cytoplasm. Required for pre-mRNA splicing. Represses the splicing of MAPT/Tau exon 10. May function as export adapter involved in mRNA nuclear export such as of histone H2A. Binds mRNA which is thought to be transferred to the NXF1-NXT1 heterodimer for export (TAP/NXF1 pathway); enhances NXF1-NXT1 RNA-binding activity. RNA-binding is semi-sequence specific. This is Serine/arginine-rich splicing factor 7 (SRSF7) from Bos taurus (Bovine).